Reading from the N-terminus, the 440-residue chain is MFLAQEIIRKKRDGHALSDEEIRFFINGIRDNTISEGQIAALAMTIFFHDMTMPERVSLTMAMRDSGTVLDWKSLHLNGPIVDKHSTGGVGDVTSLMLGPMVAACGGYIPMISGRGLGHTGGTLDKLESIPGFDIFPDDNRFREIIKDVGVAIIGQTSSLAPADKRFYATRDITATVDSIPLITASILAKKLAEGLDALVMDVKVGSGAFMPTYELSEALAEAIVGVANGAGVRTTALLTDMNQVLASSAGNAVEVREAVQFLTGEYRNPRLFDVTMALCVEMLISGKLAKDDAEARAKLQAVLDNGKAAEVFGRMVAAQKGPTDFVENYAKYLPTAMLTKAVYADTEGFVSEMDTRALGMAVVAMGGGRRQASDTIDYSVGFTDMARLGDQVDGQRPLAVIHAKDENSWQEAAKAVKAAIKLADKAPESTPTVYRRISE.

It belongs to the thymidine/pyrimidine-nucleoside phosphorylase family. Homodimer.

It catalyses the reaction thymidine + phosphate = 2-deoxy-alpha-D-ribose 1-phosphate + thymine. It participates in pyrimidine metabolism; dTMP biosynthesis via salvage pathway; dTMP from thymine: step 1/2. Its function is as follows. The enzymes which catalyze the reversible phosphorolysis of pyrimidine nucleosides are involved in the degradation of these compounds and in their utilization as carbon and energy sources, or in the rescue of pyrimidine bases for nucleotide synthesis. In Escherichia coli O139:H28 (strain E24377A / ETEC), this protein is Thymidine phosphorylase.